A 429-amino-acid polypeptide reads, in one-letter code: Metacaspase-1A (429 aa).

A disordered region spans residues 1–68; sequence MQHHHQGSYG…PQHNGGQMYG (68 aa). The span at 8-19 shows a compositional bias: gly residues; it reads SYGGGGGGGGYP. Low complexity predominate over residues 20–45; sequence GQAYREQNPYGYGQQSPQQGYGAPQQ. Residues 46-62 show a composition bias toward polar residues; it reads HNGYNQPPSGYGQPQHN. Residues His-220 and Cys-276 contribute to the active site.

This sequence belongs to the peptidase C14B family.

In terms of biological role, involved in cell death (apoptosis). The sequence is that of Metacaspase-1A (casA) from Aspergillus clavatus (strain ATCC 1007 / CBS 513.65 / DSM 816 / NCTC 3887 / NRRL 1 / QM 1276 / 107).